A 63-amino-acid chain; its full sequence is Large ribosomal subunit protein uL29 (63 aa).

The protein belongs to the universal ribosomal protein uL29 family.

This chain is Large ribosomal subunit protein uL29, found in Yersinia enterocolitica serotype O:8 / biotype 1B (strain NCTC 13174 / 8081).